The primary structure comprises 196 residues: Protein LSM12 homolog B (196 aa).

Residues 3-70 (APGPGEYFSV…LAYVSEVDII (68 aa)) form the Sm domain. Residues 81 to 175 (ASLNFNKLVN…IVEKHFRDVE (95 aa)) form the AD domain.

It belongs to the LSM12 family.

In Danio rerio (Zebrafish), this protein is Protein LSM12 homolog B (lsm12b).